The following is a 323-amino-acid chain: MSNLKQLRTRIKSVKSTQKITKAMQLVSASKMAKIKSQIANSNFYIEAVSKMMSAILSIDIYELSIEEQKFFNTVPNKANLLIVMTSQRGLCGTFNYSIIKQVKNDIKELENKGEQIKLIIIGKKGYEALKRQYVNYIDSYFELPKIHDENLMLQVKQKIMSAVENLEVSNCVIYFNKFKNAMTQIMTRQQILPVAKYQDHSMIDNPIVNLVGFGYKERGAKPINNRRATSDIVGESKSIDYNYEYEGENLISNLINLYVNSQINYALLQSRASEEGARMTAMENATNNANDLISKLVLKLNRSRQAIITTELIEIIAGSEAV.

Belongs to the ATPase gamma chain family. F-type ATPases have 2 components, CF(1) - the catalytic core - and CF(0) - the membrane proton channel. CF(1) has five subunits: alpha(3), beta(3), gamma(1), delta(1), epsilon(1). CF(0) has three main subunits: a, b and c.

It is found in the cell inner membrane. Functionally, produces ATP from ADP in the presence of a proton gradient across the membrane. The gamma chain is believed to be important in regulating ATPase activity and the flow of protons through the CF(0) complex. This chain is ATP synthase gamma chain, found in Rickettsia peacockii (strain Rustic).